A 389-amino-acid chain; its full sequence is Chalcone synthase 1 (389 aa).

Cysteine 164 is a catalytic residue.

The protein belongs to the thiolase-like superfamily. Chalcone/stilbene synthases family.

The enzyme catalyses (E)-4-coumaroyl-CoA + 3 malonyl-CoA + 3 H(+) = 2',4,4',6'-tetrahydroxychalcone + 3 CO2 + 4 CoA. It participates in secondary metabolite biosynthesis; flavonoid biosynthesis. In terms of biological role, the primary product of this enzyme is 4,2',4',6'-tetrahydroxychalcone (also termed naringenin-chalcone or chalcone) which can under specific conditions spontaneously isomerize into naringenin. This Daucus carota (Wild carrot) protein is Chalcone synthase 1 (CHS1).